The following is a 489-amino-acid chain: DBIRD complex subunit ZNF326 (489 aa).

Disordered stretches follow at residues 1 to 28 (MDRE…EMGD), 62 to 100 (EQGH…PSFT), 133 to 181 (VGSR…RPGL), and 205 to 263 (PPFK…KNSE). Polar residues predominate over residues 7–22 (SYNQRSMDSYGNQSYS). Positions 62–76 (EQGHFGDSYDGRYEN) are enriched in basic and acidic residues. Polar residues predominate over residues 91–100 (GGSSWDPSFT). The Bipartite nuclear localization signal motif lies at 200–221 (KRKMAPPFKPVGVFGKKQKLSK). 2 consecutive C2H2 AKAP95-type zinc fingers follow at residues 273-295 (CSFC…STTH) and 365-388 (CSAC…SADH). Residues 431-489 (ETQPEEQQQEQEEEEEEEEQQEQAAVPEQDLSEEQPAAIAAEPEGEDFTCDPLTTTDEV) are disordered. Acidic residues predominate over residues 433–451 (QPEEQQQEQEEEEEEEEQQ).

The protein belongs to the AKAP95 family. Component of the DBIRD complex.

The protein resides in the nucleus. Its function is as follows. Core component of the DBIRD complex, a multiprotein complex that acts at the interface between core mRNP particles and RNA polymerase II (RNAPII) and integrates transcript elongation with the regulation of alternative splicing. The protein is DBIRD complex subunit ZNF326 (znf326) of Xenopus tropicalis (Western clawed frog).